We begin with the raw amino-acid sequence, 446 residues long: tRNA modification GTPase MnmE (446 aa).

Arginine 24, glutamate 81, and lysine 120 together coordinate (6S)-5-formyl-5,6,7,8-tetrahydrofolate. A TrmE-type G domain is found at 216–368 (GLHAVLIGPP…LHIRLRELAL (153 aa)). Asparagine 226 is a K(+) binding site. Residues 226 to 231 (NAGKSS), 245 to 251 (TDVAGTT), and 270 to 273 (DTAG) contribute to the GTP site. Residue serine 230 coordinates Mg(2+). K(+) is bound by residues threonine 245, valine 247, and threonine 250. Residue threonine 251 participates in Mg(2+) binding. A (6S)-5-formyl-5,6,7,8-tetrahydrofolate-binding site is contributed by lysine 446.

The protein belongs to the TRAFAC class TrmE-Era-EngA-EngB-Septin-like GTPase superfamily. TrmE GTPase family. As to quaternary structure, homodimer. Heterotetramer of two MnmE and two MnmG subunits. It depends on K(+) as a cofactor.

Its subcellular location is the cytoplasm. Its function is as follows. Exhibits a very high intrinsic GTPase hydrolysis rate. Involved in the addition of a carboxymethylaminomethyl (cmnm) group at the wobble position (U34) of certain tRNAs, forming tRNA-cmnm(5)s(2)U34. In Xanthomonas oryzae pv. oryzae (strain KACC10331 / KXO85), this protein is tRNA modification GTPase MnmE.